A 289-amino-acid polypeptide reads, in one-letter code: ATP synthase gamma chain (289 aa).

This sequence belongs to the ATPase gamma chain family. F-type ATPases have 2 components, CF(1) - the catalytic core - and CF(0) - the membrane proton channel. CF(1) has five subunits: alpha(3), beta(3), gamma(1), delta(1), epsilon(1). CF(0) has three main subunits: a, b and c.

It is found in the cell inner membrane. Its function is as follows. Produces ATP from ADP in the presence of a proton gradient across the membrane. The gamma chain is believed to be important in regulating ATPase activity and the flow of protons through the CF(0) complex. This is ATP synthase gamma chain from Nitrosococcus oceani (strain ATCC 19707 / BCRC 17464 / JCM 30415 / NCIMB 11848 / C-107).